We begin with the raw amino-acid sequence, 276 residues long: Ribosomal RNA small subunit methyltransferase J (276 aa).

Residues 135-136 and D191 contribute to the S-adenosyl-L-methionine site; that span reads ER.

Belongs to the methyltransferase superfamily. RsmJ family.

It is found in the cytoplasm. It carries out the reaction guanosine(1516) in 16S rRNA + S-adenosyl-L-methionine = N(2)-methylguanosine(1516) in 16S rRNA + S-adenosyl-L-homocysteine + H(+). Its function is as follows. Specifically methylates the guanosine in position 1516 of 16S rRNA. This chain is Ribosomal RNA small subunit methyltransferase J, found in Hydrogenovibrio crunogenus (strain DSM 25203 / XCL-2) (Thiomicrospira crunogena).